The following is a 335-amino-acid chain: Ferrochelatase (335 aa).

Fe cation-binding residues include histidine 207 and glutamate 288.

This sequence belongs to the ferrochelatase family.

It localises to the cytoplasm. It catalyses the reaction heme b + 2 H(+) = protoporphyrin IX + Fe(2+). Its pathway is porphyrin-containing compound metabolism; protoheme biosynthesis; protoheme from protoporphyrin-IX: step 1/1. Catalyzes the ferrous insertion into protoporphyrin IX. The chain is Ferrochelatase from Helicobacter pylori (strain J99 / ATCC 700824) (Campylobacter pylori J99).